The primary structure comprises 350 residues: Small ribosomal subunit biogenesis GTPase RsgA (350 aa).

The span at 1–17 (MSKNKLSKGQQRRVNAN) shows a compositional bias: polar residues. The tract at residues 1–27 (MSKNKLSKGQQRRVNANHQRRLKTSAE) is disordered. The CP-type G domain occupies 104 to 273 (TSVLTRPDFY…VIDSPGVREF (170 aa)). GTP contacts are provided by residues 160–163 (NKID) and 214–222 (GQSGVGKSS). Zn(2+) is bound by residues Cys297, Cys302, His304, and Cys310.

Belongs to the TRAFAC class YlqF/YawG GTPase family. RsgA subfamily. In terms of assembly, monomer. Associates with 30S ribosomal subunit, binds 16S rRNA. Zn(2+) serves as cofactor.

The protein resides in the cytoplasm. In terms of biological role, one of several proteins that assist in the late maturation steps of the functional core of the 30S ribosomal subunit. Helps release RbfA from mature subunits. May play a role in the assembly of ribosomal proteins into the subunit. Circularly permuted GTPase that catalyzes slow GTP hydrolysis, GTPase activity is stimulated by the 30S ribosomal subunit. The protein is Small ribosomal subunit biogenesis GTPase RsgA of Salmonella agona (strain SL483).